The primary structure comprises 94 residues: Integration host factor subunit beta (94 aa).

Belongs to the bacterial histone-like protein family. As to quaternary structure, heterodimer of an alpha and a beta chain.

This protein is one of the two subunits of integration host factor, a specific DNA-binding protein that functions in genetic recombination as well as in transcriptional and translational control. This Mannheimia succiniciproducens (strain KCTC 0769BP / MBEL55E) protein is Integration host factor subunit beta.